Reading from the N-terminus, the 150-residue chain is Cytochrome c oxidase subunit 5A, mitochondrial (150 aa).

The transit peptide at 1 to 41 directs the protein to the mitochondrion; the sequence is MLGAALRRCAVAATTRAGPRGLLHSARTPGPAAAIQSVRCY. The SIFI-degron motif lies at 2 to 17; the sequence is LGAALRRCAVAATTRA. 2 positions are modified to N6-acetyllysine: K87 and K113. Residue T141 is modified to Phosphothreonine.

Belongs to the cytochrome c oxidase subunit 5A family. As to quaternary structure, component of the cytochrome c oxidase (complex IV, CIV), a multisubunit enzyme composed of 14 subunits. The complex is composed of a catalytic core of 3 subunits MT-CO1, MT-CO2 and MT-CO3, encoded in the mitochondrial DNA, and 11 supernumerary subunits COX4I, COX5A, COX5B, COX6A, COX6B, COX6C, COX7A, COX7B, COX7C, COX8 and NDUFA4, which are encoded in the nuclear genome. The complex exists as a monomer or a dimer and forms supercomplexes (SCs) in the inner mitochondrial membrane with NADH-ubiquinone oxidoreductase (complex I, CI) and ubiquinol-cytochrome c oxidoreductase (cytochrome b-c1 complex, complex III, CIII), resulting in different assemblies (supercomplex SCI(1)III(2)IV(1) and megacomplex MCI(2)III(2)IV(2)). Interacts with AFG1L. Interacts with RAB5IF. Post-translationally, in response to mitochondrial stress, the precursor protein is ubiquitinated by the SIFI complex in the cytoplasm before mitochondrial import, leading to its degradation. Within the SIFI complex, UBR4 initiates ubiquitin chain that are further elongated or branched by KCMF1.

It localises to the mitochondrion inner membrane. It participates in energy metabolism; oxidative phosphorylation. In terms of biological role, component of the cytochrome c oxidase, the last enzyme in the mitochondrial electron transport chain which drives oxidative phosphorylation. The respiratory chain contains 3 multisubunit complexes succinate dehydrogenase (complex II, CII), ubiquinol-cytochrome c oxidoreductase (cytochrome b-c1 complex, complex III, CIII) and cytochrome c oxidase (complex IV, CIV), that cooperate to transfer electrons derived from NADH and succinate to molecular oxygen, creating an electrochemical gradient over the inner membrane that drives transmembrane transport and the ATP synthase. Cytochrome c oxidase is the component of the respiratory chain that catalyzes the reduction of oxygen to water. Electrons originating from reduced cytochrome c in the intermembrane space (IMS) are transferred via the dinuclear copper A center (CU(A)) of subunit 2 and heme A of subunit 1 to the active site in subunit 1, a binuclear center (BNC) formed by heme A3 and copper B (CU(B)). The BNC reduces molecular oxygen to 2 water molecules using 4 electrons from cytochrome c in the IMS and 4 protons from the mitochondrial matrix. The sequence is that of Cytochrome c oxidase subunit 5A, mitochondrial (COX5A) from Gorilla gorilla gorilla (Western lowland gorilla).